The chain runs to 120 residues: U13-lycotoxin-Ls1a (120 aa).

The first 16 residues, 1–16, serve as a signal peptide directing secretion; that stretch reads MKTLFVLISILYAVYC. Residues 17 to 54 constitute a propeptide that is removed on maturation; it reads FSSEEDVDSAYLANELEPVEDINSEQYAALEPKEEQER. 4 disulfides stabilise this stretch: Cys56–Cys70, Cys63–Cys76, Cys69–Cys87, and Cys78–Cys85. Positions 56–95 constitute an Agouti domain; it reads CADMGQDCKDDCDCCLNIATCNCWFGRYFCSCTFGDYQTC.

This sequence belongs to the neurotoxin 05 (agouti) family. In terms of processing, contains 6 disulfide bonds. As to expression, expressed by the venom gland.

It is found in the secreted. The polypeptide is U13-lycotoxin-Ls1a (Lycosa singoriensis (Wolf spider)).